The following is a 444-amino-acid chain: tRNA modification GTPase MnmE (444 aa).

Residues Arg28, Glu86, and Arg126 each coordinate (6S)-5-formyl-5,6,7,8-tetrahydrofolate. The TrmE-type G domain occupies 224–368 (GFCVVLAGAP…LLDAIQGSAA (145 aa)). A K(+)-binding site is contributed by Asn234. GTP-binding positions include 234–239 (NAGKST), 253–259 (SDIPGTT), and 278–281 (DTAG). Mg(2+) is bound at residue Ser238. The K(+) site is built by Ser253, Ile255, and Thr258. Thr259 contacts Mg(2+). A (6S)-5-formyl-5,6,7,8-tetrahydrofolate-binding site is contributed by Lys444.

It belongs to the TRAFAC class TrmE-Era-EngA-EngB-Septin-like GTPase superfamily. TrmE GTPase family. As to quaternary structure, homodimer. Heterotetramer of two MnmE and two MnmG subunits. K(+) serves as cofactor.

It is found in the cytoplasm. In terms of biological role, exhibits a very high intrinsic GTPase hydrolysis rate. Involved in the addition of a carboxymethylaminomethyl (cmnm) group at the wobble position (U34) of certain tRNAs, forming tRNA-cmnm(5)s(2)U34. This is tRNA modification GTPase MnmE from Methylorubrum populi (strain ATCC BAA-705 / NCIMB 13946 / BJ001) (Methylobacterium populi).